Reading from the N-terminus, the 454-residue chain is Anthocyanidin 3-O-galactosyltransferase 3GT6 (454 aa).

The N-terminal stretch at 1-21 (MTNSSKGRHVAVLPFPFSTHA) is a signal peptide. S18 and H20 together coordinate an anthocyanidin. The Proton acceptor role is filled by H20. D117 serves as the catalytic Charge relay. Position 148 (H148) interacts with an anthocyanidin. Positions 331, 333, 348, 351, 352, 353, and 356 each coordinate UDP-alpha-D-glucose. G371 is a binding site for an anthocyanidin. UDP-alpha-D-glucose is bound at residue D372. N441 is a glycosylation site (N-linked (GlcNAc...) asparagine).

This sequence belongs to the UDP-glycosyltransferase family. Monomer. In terms of tissue distribution, mostly expressed in leaves and flowers and, to a lower extent, in roots. In flowers, mainly observed in petals, stamens and scapes, and at lower levels in pistils and toruses.

It carries out the reaction cyanidin + UDP-alpha-D-galactose = cyanidin 3-O-beta-D-galactoside + UDP + H(+). It catalyses the reaction cyanidin + UDP-alpha-D-glucose = cyanidin 3-O-beta-D-glucoside + UDP + H(+). The enzyme catalyses delphinidin + UDP-alpha-D-glucose = delphinidin 3-O-beta-D-glucoside + UDP. The catalysed reaction is peonidin + UDP-alpha-D-glucose = peonidin 3-O-beta-D-glucoside + UDP. It carries out the reaction pelargonidin + UDP-alpha-D-glucose = pelargonidin 3-O-beta-D-glucoside + UDP. It catalyses the reaction delphinidin + UDP-alpha-D-galactose = delphinidin 3-O-beta-D-galactoside + UDP + H(+). The enzyme catalyses pelargonidin + UDP-alpha-D-galactose = pelargonidin 3-O-beta-D-galactoside betaine + UDP. The catalysed reaction is peonidin + UDP-alpha-D-galactose = peonidin 3-O-beta-D-galactoside + UDP. It carries out the reaction petunidin + UDP-alpha-D-galactose = petunidin 3-O-beta-D-galactoside + UDP. It catalyses the reaction petunidin + UDP-alpha-D-glucose = petunidin 3-O-beta-D-glucoside + UDP. The enzyme catalyses an anthocyanidin + UDP-alpha-D-glucose + H(+) = an anthocyanidin 3-O-beta-D-glucoside + UDP. The catalysed reaction is an anthocyanidin + UDP-alpha-D-galactose = an anthocyanidin 3-O-beta-D-galactoside + UDP. Its pathway is pigment biosynthesis; anthocyanin biosynthesis. In terms of biological role, flavonoid 3-O-glycosyltransferase involved in the biosynthesis of anthocyanins conferring flower red/pink colors, mainly anthocyanidin 3-O-glycosides. Catalyzes the addition of UDP-sugar to the 3-OH of anthocyanidin, with a preference for UDP-galactose (UDP-Gal) as sugar donor and cyanidin as substrate; able to use delphinidin, pelargonidin, peonidin and petunidin as substrates in the presence of UDP-Gal, but barely active on malvidin. Can also use UDP-glucose (UDP-Glu) as sugar donor with cyanidin, delphinidin, pelargonidin, peonidin and petunidin as substrates, but not active on malvidin. The sequence is that of Anthocyanidin 3-O-galactosyltransferase 3GT6 from Rhododendron delavayi (Rhododendron).